Reading from the N-terminus, the 397-residue chain is Protein EMSY-LIKE 3 (397 aa).

Residues 1 to 40 form a disordered region; that stretch reads MDYRPSDSSGTDDDLPPSHQGRYQRNARPTGNGRPSVLNS. One can recognise an ENT domain in the interval 50 to 137; it reads METQIHLIEQ…PQLVHDAPSP (88 aa). Residues 81–107 are a coiled coil; it reads ESLITELRKELRVSDEEHRELLSRVNA. Disordered stretches follow at residues 122–221 and 284–330; these read SLQS…SYDP and DPGI…TQNG. The segment covering 164–174 has biased composition (polar residues); that stretch reads LHPSMQPSSSA. The Nuclear localization signal signature appears at 175 to 182; sequence LRRGGPPP. Residues 363-389 adopt a coiled-coil conformation; that stretch reads AEVEKAKRVLRDHELALMDAIAKLEEI. Phosphoserine is present on S390.

Its subcellular location is the nucleus. Functionally, probably involved in the regulation of chromatin states. Contributes to basal immunity. This is Protein EMSY-LIKE 3 from Arabidopsis thaliana (Mouse-ear cress).